A 55-amino-acid polypeptide reads, in one-letter code: Conotoxin Cal14.14 (55 aa).

Positions 1 to 20 are cleaved as a signal peptide; that stretch reads MFRLGVFLLTFLLLVSMATS. Intrachain disulfides connect C34-C48 and C38-C52.

Expressed by the venom duct.

It localises to the secreted. Functionally, probable neurotoxin. This is Conotoxin Cal14.14 from Californiconus californicus (California cone).